Here is a 747-residue protein sequence, read N- to C-terminus: Sushi domain-containing protein 1 (747 aa).

An N-terminal signal peptide occupies residues 1–29 (MGRGPWDAGPSRRLLPLLLLLGLARGAAG). Residues 30 to 721 (APGPDGLDVC…WAQVKDSSLM (692 aa)) lie on the Extracellular side of the membrane. The 38-residue stretch at 35–72 (GLDVCATCHEHATCQQREGKKICICNYGFVGNGRTQCV) folds into the EGF-like 1 domain. 5 disulfide bridges follow: Cys-39–Cys-48, Cys-42–Cys-57, Cys-59–Cys-71, Cys-77–Cys-91, and Cys-85–Cys-100. An EGF-like 2; calcium-binding domain is found at 73 to 112 (DKNECQFGATLVCGNHTSCHNTPGGFYCICLEGYRATNNN). N-linked (GlcNAc...) asparagine glycans are attached at residues Asn-87 and Asn-112. The 38-residue stretch at 125-162 (DIDECEVSGLCRHGGRCVNTHGSFECYCMDGYLPRNGP) folds into the EGF-like 3; calcium-binding domain. 6 cysteine pairs are disulfide-bonded: Cys-129-Cys-141, Cys-135-Cys-150, Cys-179-Cys-221, Cys-206-Cys-234, Cys-239-Cys-281, and Cys-266-Cys-294. Sushi domains lie at 177 to 236 (IDCG…HCQE) and 237 to 296 (INCG…TCTE). Asn-193 carries N-linked (GlcNAc...) asparagine glycosylation. N-linked (GlcNAc...) asparagine glycosylation is present at Asn-253. Residues Asn-348, Asn-367, and Asn-563 are each glycosylated (N-linked (GlcNAc...) asparagine). A helical membrane pass occupies residues 722 to 742 (LLQMAGVGLGSLAVVIILTFL). Residues 743 to 747 (SFSAV) are Cytoplasmic-facing.

The protein resides in the membrane. The protein is Sushi domain-containing protein 1 (SUSD1) of Homo sapiens (Human).